The primary structure comprises 258 residues: Trypsin eta (258 aa).

The signal sequence occupies residues 1–22 (MNKVILRILALLFLLGIGAVSA). The propeptide at 23–27 (QPDGR) is activation peptide. Residues 28-258 (IVGGADTTNY…YFKDWIASRV (231 aa)) enclose the Peptidase S1 domain. A disulfide bridge connects residues Cys59 and Cys75. Active-site charge relay system residues include His74 and Asp120. 2 disulfide bridges follow: Cys185-Cys200 and Cys211-Cys235. The active-site Charge relay system is Ser215.

This sequence belongs to the peptidase S1 family.

The protein localises to the secreted. The protein resides in the extracellular space. It catalyses the reaction Preferential cleavage: Arg-|-Xaa, Lys-|-Xaa.. The polypeptide is Trypsin eta (etaTry) (Drosophila erecta (Fruit fly)).